The primary structure comprises 446 residues: Keratin, type I cytoskeletal 25 (446 aa).

Residues Met1–Asn74 form a head region. Residues Glu75–Trp110 are coil 1A. Residues Glu75–Cys390 form the IF rod domain. The tract at residues Tyr111 to Ile132 is linker 1. A coil 1B region spans residues Ile133–Leu224. Positions Gln225–Leu247 are linker 12. The coil 2 stretch occupies residues Leu248–Asp386. Positions Glu387 to Asn446 are tail. Ser438 carries the phosphoserine modification.

Belongs to the intermediate filament family. As to quaternary structure, heterodimer of a type I and a type II keratin. Heterodimer with type II keratin KRT5 leading to the formation of keratin intermediate filament (KIF) network. Interacts with KRT6A to form filaments.

It is found in the cytoplasm. Essential for the proper assembly of type I and type II keratin protein complexes and formation of keratin intermediate filaments in the inner root sheath (irs). Plays a role in the cytoskeleton organization. The polypeptide is Keratin, type I cytoskeletal 25 (Mus musculus (Mouse)).